Here is a 367-residue protein sequence, read N- to C-terminus: tRNA/tmRNA (uracil-C(5))-methyltransferase (367 aa).

Gln-190, Tyr-218, Asn-223, Glu-239, and Asp-299 together coordinate S-adenosyl-L-methionine. The active-site Nucleophile is the Cys-324. Glu-358 (proton acceptor) is an active-site residue.

The protein belongs to the class I-like SAM-binding methyltransferase superfamily. RNA M5U methyltransferase family. TrmA subfamily.

It catalyses the reaction uridine(54) in tRNA + S-adenosyl-L-methionine = 5-methyluridine(54) in tRNA + S-adenosyl-L-homocysteine + H(+). The catalysed reaction is uridine(341) in tmRNA + S-adenosyl-L-methionine = 5-methyluridine(341) in tmRNA + S-adenosyl-L-homocysteine + H(+). Functionally, dual-specificity methyltransferase that catalyzes the formation of 5-methyluridine at position 54 (m5U54) in all tRNAs, and that of position 341 (m5U341) in tmRNA (transfer-mRNA). This Pectobacterium carotovorum subsp. carotovorum (strain PC1) protein is tRNA/tmRNA (uracil-C(5))-methyltransferase.